The following is a 151-amino-acid chain: Ubiquitin-conjugating enzyme E2 W (151 aa).

Positions 3 to 151 constitute a UBC core domain; sequence SMQKRLQKEL…TKWWYHDDTC (149 aa). The Glycyl thioester intermediate role is filled by Cys91.

The protein belongs to the ubiquitin-conjugating enzyme family.

It localises to the nucleus. The catalysed reaction is S-ubiquitinyl-[E1 ubiquitin-activating enzyme]-L-cysteine + [E2 ubiquitin-conjugating enzyme]-L-cysteine = [E1 ubiquitin-activating enzyme]-L-cysteine + S-ubiquitinyl-[E2 ubiquitin-conjugating enzyme]-L-cysteine.. It catalyses the reaction S-ubiquitinyl-[E1 ubiquitin-activating enzyme]-L-cysteine + [acceptor protein]-N-terminal-amino acid = [E1 ubiquitin-activating enzyme]-L-cysteine + N-terminal-ubiquitinyl-[acceptor protein].. It participates in protein modification; protein ubiquitination. Its function is as follows. Accepts ubiquitin from the E1 complex and catalyzes its covalent attachment to other proteins. Catalyzes monoubiquitination. Involved in degradation of misfolded chaperone substrate and DNA repair. This chain is Ubiquitin-conjugating enzyme E2 W (ube2w), found in Xenopus tropicalis (Western clawed frog).